A 271-amino-acid polypeptide reads, in one-letter code: Phosphatidate cytidylyltransferase (271 aa).

8 helical membrane passes run 12–32 (LLPI…ALFI), 53–73 (FGRV…YHLP), 75–95 (LAGA…VLVL), 111–131 (LGMG…LKQW), 136–156 (GLII…YFSG), 174–194 (WEGV…VGLY), 199–219 (LGAL…SIVG), and 251–271 (SLTA…WGAP).

Belongs to the CDS family.

It is found in the cell inner membrane. The catalysed reaction is a 1,2-diacyl-sn-glycero-3-phosphate + CTP + H(+) = a CDP-1,2-diacyl-sn-glycerol + diphosphate. Its pathway is phospholipid metabolism; CDP-diacylglycerol biosynthesis; CDP-diacylglycerol from sn-glycerol 3-phosphate: step 3/3. This is Phosphatidate cytidylyltransferase (cdsA) from Pseudomonas aeruginosa (strain ATCC 15692 / DSM 22644 / CIP 104116 / JCM 14847 / LMG 12228 / 1C / PRS 101 / PAO1).